The primary structure comprises 235 residues: Gene 53 protein (235 aa).

The polypeptide is Gene 53 protein (53) (Mycobacterium phage D29 (Mycobacteriophage D29)).